A 97-amino-acid chain; its full sequence is M-zodatoxin-Lt7a (97 aa).

The signal sequence occupies residues 1–22 (MKFYVVALALLVAFVCIAESRS). Residues 23-63 (VETERAVDADLEDDLDDLEEYLEGIAEALELEDFPDTEEAR) constitute a propeptide that is removed on maturation. The short motif at 60 to 63 (EEAR) is the Processing quadruplet motif element.

Cleavage of the propeptide depends on the processing quadruplet motif (XXXR, with at least one of X being E). In terms of tissue distribution, expressed by the venom gland.

Its subcellular location is the secreted. Its function is as follows. Does not have antimicrobial or antifungal activity. Does not have hemolytic activity against rabbit erythrocytes. However, it causes some conductance changes in planar bilayer membranes, without membrane rupture, suggesting a cytolytic function on other biological targets. It causes paralysis, but is not lethal when injected into insect (M.domestica) larvae. This Lachesana tarabaevi (Spider) protein is M-zodatoxin-Lt7a.